The chain runs to 194 residues: Endoribonuclease ToxN (194 aa).

Positions 114–182 (MLKQYLFLKE…DQAKERDKAR (69 aa)) form a coiled coil. Basic and acidic residues predominate over residues 171–182 (ERDQAKERDKAR). The segment at 171-194 (ERDQAKERDKARRIAYMRQMGRER) is disordered.

This sequence belongs to the ToxN/AbiQ toxin family. In terms of assembly, one ToxN monomer binds to a 34-nt-long single repeat of the ToxI RNA; this complex forms a triangular heterohexameric complex with ToxN connected by the ToxI RNA to another toxin molecule. The ToxI repeats are cleavage products of their precursor. The ToxI repeat forms a pseudoknot which occludes the toxin active site.

Its function is as follows. Toxic component of a type III toxin-antitoxin (TA) system. An endoribonuclease which cleaves between the first and second A of AAAAA sequences; it tolerates other nucleotides in positions +2 and +4 of the consensus. Digests cognate antitoxin RNA ToxI as shown by the 2'-3'-cyclic phosphate at the 3' end of the 34-nt repeats and probably other RNAs. Inhibits growth when expressed in E.coli without causing cell lysis; this bacteriostatic effect is neutralized by cognate RNA antitoxin ToxI, which has 2.9 nearly identical 34 nucleotide-long repeats. Non-cognate antitoxin RNA from P.atrosepticum does not inhibit this toxin. The toxin-antitoxin pair function in plasmid maintenance (a plasmid addiction system), but unlike its P.atrosepticum homolog it is not seen to confer resistance to bacteriophages. The chain is Endoribonuclease ToxN from Bacillus thuringiensis subsp. kurstaki.